A 73-amino-acid chain; its full sequence is Translation initiation factor IF-1 (73 aa).

The region spanning 1–72 (MSKKDVIELE…SRGRIVYRKK (72 aa)) is the S1-like domain.

Belongs to the IF-1 family. In terms of assembly, component of the 30S ribosomal translation pre-initiation complex which assembles on the 30S ribosome in the order IF-2 and IF-3, IF-1 and N-formylmethionyl-tRNA(fMet); mRNA recruitment can occur at any time during PIC assembly.

It is found in the cytoplasm. One of the essential components for the initiation of protein synthesis. Stabilizes the binding of IF-2 and IF-3 on the 30S subunit to which N-formylmethionyl-tRNA(fMet) subsequently binds. Helps modulate mRNA selection, yielding the 30S pre-initiation complex (PIC). Upon addition of the 50S ribosomal subunit IF-1, IF-2 and IF-3 are released leaving the mature 70S translation initiation complex. The sequence is that of Translation initiation factor IF-1 from Fusobacterium nucleatum subsp. nucleatum (strain ATCC 25586 / DSM 15643 / BCRC 10681 / CIP 101130 / JCM 8532 / KCTC 2640 / LMG 13131 / VPI 4355).